Reading from the N-terminus, the 207-residue chain is Ribosomal RNA small subunit methyltransferase G (207 aa).

S-adenosyl-L-methionine contacts are provided by residues Gly76, Gln81, 127 to 128 (VE), and Arg141.

Belongs to the methyltransferase superfamily. RNA methyltransferase RsmG family.

Its subcellular location is the cytoplasm. The catalysed reaction is guanosine(527) in 16S rRNA + S-adenosyl-L-methionine = N(7)-methylguanosine(527) in 16S rRNA + S-adenosyl-L-homocysteine. In terms of biological role, specifically methylates the N7 position of guanine in position 527 of 16S rRNA. This Neisseria meningitidis serogroup A / serotype 4A (strain DSM 15465 / Z2491) protein is Ribosomal RNA small subunit methyltransferase G.